A 32-amino-acid polypeptide reads, in one-letter code: Coenzyme PQQ synthesis protein A (32 aa).

Positions 16 to 20 form a cross-link, pyrroloquinoline quinone (Glu-Tyr); the sequence is EINMY.

The protein belongs to the PqqA family.

It participates in cofactor biosynthesis; pyrroloquinoline quinone biosynthesis. Functionally, required for coenzyme pyrroloquinoline quinone (PQQ) biosynthesis. PQQ is probably formed by cross-linking a specific glutamate to a specific tyrosine residue and excising these residues from the peptide. The protein is Coenzyme PQQ synthesis protein A of Dinoroseobacter shibae (strain DSM 16493 / NCIMB 14021 / DFL 12).